The sequence spans 312 residues: Bark storage protein B (312 aa).

An N-terminal signal peptide occupies residues 1–24 (MPQQSMQASLRDPIAEIERSNCKI). An N-linked (GlcNAc...) asparagine glycan is attached at Asn70.

It to wound-inducible poplar endochitinases. Monomer. Bark tissue.

May play a role in nitrogen storage. This Populus deltoides (Eastern poplar) protein is Bark storage protein B (BSP).